Here is a 153-residue protein sequence, read N- to C-terminus: Ubiquitin-conjugating enzyme E2 35 (153 aa).

The region spanning 5 to 151 (NLPRRIIKET…AKEWTRLYAS (147 aa)) is the UBC core domain. The active-site Glycyl thioester intermediate is C89.

It belongs to the ubiquitin-conjugating enzyme family. As to quaternary structure, interacts with yeast and human Mms2, with the RING domain of RGLG2 and with UEV1A, UEV1B, UEV1C and UEV1D. In terms of tissue distribution, ubiquitously expressed at low level. Mainly expressed in the vasculature.

It carries out the reaction S-ubiquitinyl-[E1 ubiquitin-activating enzyme]-L-cysteine + [E2 ubiquitin-conjugating enzyme]-L-cysteine = [E1 ubiquitin-activating enzyme]-L-cysteine + S-ubiquitinyl-[E2 ubiquitin-conjugating enzyme]-L-cysteine.. Its pathway is protein modification; protein ubiquitination. Catalyzes the synthesis of non-canonical poly-ubiquitin chains that are linked through 'Lys-63'. This type of poly-ubiquitination does not lead to protein degradation by the proteasome. Mediates transcriptional activation of target genes. Required for postreplication repair of UV-damaged DNA and for adapting root developmental programs to suboptimal availability of iron. This chain is Ubiquitin-conjugating enzyme E2 35 (UBC35), found in Arabidopsis thaliana (Mouse-ear cress).